Consider the following 274-residue polypeptide: Proliferating cell nuclear antigen 1 (274 aa).

Residues 61–80 (RCDRERVLGVNIASLNKVFK) mediate DNA binding.

It belongs to the PCNA family. As to quaternary structure, homotrimer. Interacts with ORC1 (via PIP-box motif); the interaction occurs during DNA replication in trophozoites. Interacts with ORC5; the interaction occurs during the trophozoite stage but not at the late schizont stage. Interacts with FEN1.

It localises to the nucleus. Its subcellular location is the chromosome. It is found in the cytoplasm. Auxiliary protein of DNA polymerase delta and is involved in the control of DNA replication by increasing the polymerase processibility during elongation of the leading strand. Involved in DNA damage response. This is Proliferating cell nuclear antigen 1 from Plasmodium falciparum (isolate 3D7).